The chain runs to 299 residues: MLFDQIASNKRKTWILLLVFFLLLALVGYAVGYLFIRSGLGGLVIALIIGFIYALSMIFQSTEIVMSMNGAREVDEQTAPDLYHVVEDMALVAQIPMPRVFIIDDPALNAFATGSNPQNAAVAATSGLLAIMNREELEAVMGHEVSHIRNYDIRISTIAVALVSAITMLSGMAGRMMWWGGAGRRRSDDDRDGNGLEIIMLVVSLLAIVLAPLAATLVQLAISRQREFLADASSVELTRNPQGMINALDKLDNSKPMSRHVDDASSALYINDPKKGGGFQKLFYTHPPISERIERLKQM.

Helical transmembrane passes span 15-35 and 39-59; these read ILLLVFFLLLALVGYAVGYLF and GLGGLVIALIIGFIYALSMIF. H143 is a binding site for Zn(2+). E144 is an active-site residue. Zn(2+) is bound at residue H147. The next 2 helical transmembrane spans lie at 158–178 and 198–218; these read IAVALVSAITMLSGMAGRMMW and IIMLVVSLLAIVLAPLAATLV. E227 lines the Zn(2+) pocket.

The protein belongs to the peptidase M48B family. Zn(2+) is required as a cofactor.

It is found in the cell membrane. The sequence is that of Protease HtpX homolog from Streptococcus pneumoniae (strain Hungary19A-6).